A 565-amino-acid polypeptide reads, in one-letter code: uncharacterized protein (565 aa).

Transmembrane regions (helical) follow at residues 4–26 (FVQF…AVWV), 33–55 (GYGL…VGAA), 68–90 (SLLY…VNAL), 97–119 (YAIL…TQFF), and 162–184 (ISAM…IILL). 2 consecutive RCK C-terminal domains span residues 210 to 295 (PNVD…LGPE) and 296 to 379 (VPDA…IFGV). The next 5 helical transmembrane spans lie at 389–411 (LLTL…PAFG), 415–432 (GLGN…VSSI), 453–472 (LGLI…DLLT), 482–504 (IFIV…GFHI), and 539–561 (WLGF…YFAM).

This sequence belongs to the AAE transporter (TC 2.A.81) family.

It localises to the cell membrane. This is an uncharacterized protein from Bordetella bronchiseptica (strain ATCC BAA-588 / NCTC 13252 / RB50) (Alcaligenes bronchisepticus).